A 429-amino-acid chain; its full sequence is Ribosomal RNA small subunit methyltransferase B (429 aa).

S-adenosyl-L-methionine is bound by residues 254–260, Asp277, Asp303, and Asp322; that span reads CAAPGGK. Cys375 serves as the catalytic Nucleophile.

This sequence belongs to the class I-like SAM-binding methyltransferase superfamily. RsmB/NOP family.

It is found in the cytoplasm. It catalyses the reaction cytidine(967) in 16S rRNA + S-adenosyl-L-methionine = 5-methylcytidine(967) in 16S rRNA + S-adenosyl-L-homocysteine + H(+). In terms of biological role, specifically methylates the cytosine at position 967 (m5C967) of 16S rRNA. This Escherichia coli (strain UTI89 / UPEC) protein is Ribosomal RNA small subunit methyltransferase B.